We begin with the raw amino-acid sequence, 226 residues long: uncharacterized protein (226 aa).

An HTH cro/C1-type domain is found at 168–226 (ISALRNKLGLTQTDLGKRINVDANVIRNIETGDLVAFNVQDPMVRSLAYALGIRTIKYQ). Residues 179–198 (QTDLGKRINVDANVIRNIET) constitute a DNA-binding region (H-T-H motif).

This is an uncharacterized protein from Acanthamoeba polyphaga mimivirus (APMV).